We begin with the raw amino-acid sequence, 1431 residues long: Probable ATP-dependent RNA helicase spindle-E (1431 aa).

The Helicase ATP-binding domain maps to 127-294 (LAAIRENPVV…FAMSSSLPPV (168 aa)). Residue 140-147 (GETGCGKT) participates in ATP binding. The DEAH box signature appears at 240 to 243 (DEVH). In terms of domain architecture, Helicase C-terminal spans 354 to 526 (QSQQSYEEAK…NSVLKAKELE (173 aa)). In terms of domain architecture, Tudor spans 937–1000 (AKAVTKGLQL…RLMSPQLKRD (64 aa)).

This sequence belongs to the DEAD box helicase family. DEAH subfamily.

The protein localises to the cytoplasm. It carries out the reaction ATP + H2O = ADP + phosphate + H(+). Its function is as follows. Probable ATP-binding RNA helicase which plays a central role during spermatogenesis and oogenesis by repressing transposable elements and preventing their mobilization, which is essential for the germline integrity. Acts via the piRNA metabolic process, which mediates the repression of transposable elements during meiosis by forming complexes composed of piRNAs and Piwi and govern the methylation and subsequent repression of transposons. Involved in the repression of LTR retrotransposon copia. Also involved in telomere regulation by repressing specialized telomeric retroelements HeT-A, TAHRE, and TART; Drosophila telomeres being maintained by transposition of specialized telomeric retroelements. Involved in telomeric trans-silencing, a repression mechanism by which a transposon or a transgene inserted in subtelomeric heterochromatin has the capacity to repress in trans in the female germline, a homologous transposon, or transgene located in euchromatin. Involved in the repression of testis-expressed Stellate genes by the homologous Su(Ste) repeats. Required for anteroposterior and dorsoventral axis formation during oogenesis. The sequence is that of Probable ATP-dependent RNA helicase spindle-E (spn-E) from Drosophila mojavensis (Fruit fly).